A 148-amino-acid chain; its full sequence is Deoxyuridine 5'-triphosphate nucleotidohydrolase (148 aa).

Substrate-binding positions include Arg67–Gly69, Asn80, Leu84–Asp86, and Met94.

This sequence belongs to the dUTPase family. The cofactor is Mg(2+).

The catalysed reaction is dUTP + H2O = dUMP + diphosphate + H(+). The protein operates within pyrimidine metabolism; dUMP biosynthesis; dUMP from dCTP (dUTP route): step 2/2. Its function is as follows. This enzyme is involved in nucleotide metabolism: it produces dUMP, the immediate precursor of thymidine nucleotides and it decreases the intracellular concentration of dUTP so that uracil cannot be incorporated into DNA. The protein is Deoxyuridine 5'-triphosphate nucleotidohydrolase of Paraburkholderia xenovorans (strain LB400).